Here is a 60-residue protein sequence, read N- to C-terminus: UPF0434 protein Daci_3569 (60 aa).

It belongs to the UPF0434 family.

In Delftia acidovorans (strain DSM 14801 / SPH-1), this protein is UPF0434 protein Daci_3569.